The chain runs to 314 residues: tRNA selenocysteine 1-associated protein 1 (314 aa).

2 RRM domains span residues Asn2 to Tyr85 and Phe94 to Ser173.

Belongs to the RRM TRSPAP family.

Its subcellular location is the nucleus. It localises to the cytoplasm. Involved in the early steps of selenocysteine biosynthesis and tRNA(Sec) charging to the later steps resulting in the cotranslational incorporation of selenocysteine into selenoproteins. The polypeptide is tRNA selenocysteine 1-associated protein 1 (Danio rerio (Zebrafish)).